The sequence spans 144 residues: Putative pre-16S rRNA nuclease (144 aa).

This sequence belongs to the YqgF nuclease family.

It is found in the cytoplasm. In terms of biological role, could be a nuclease involved in processing of the 5'-end of pre-16S rRNA. In Lacticaseibacillus casei (strain BL23) (Lactobacillus casei), this protein is Putative pre-16S rRNA nuclease.